Consider the following 207-residue polypeptide: Transcriptional regulatory protein RcsA (207 aa).

The 66-residue stretch at 131 to 196 (LNMPTLSLSR…VIYHVVRLTD (66 aa)) folds into the HTH luxR-type domain. Positions 155–174 (TIQISDQMNIKAKTVSSHKG) form a DNA-binding region, H-T-H motif.

It belongs to the RcsA family. Interacts with RcsB.

Component of the Rcs signaling system, which controls transcription of numerous genes. Binds, with RcsB, to the RcsAB box to regulate expression of genes. The protein is Transcriptional regulatory protein RcsA of Escherichia coli O157:H7.